The following is a 390-amino-acid chain: GTPase Obg (390 aa).

One can recognise an Obg domain in the interval M1–L159. Positions N127–G147 are disordered. Positions R129–T145 are enriched in polar residues. Residues A160–I333 enclose the OBG-type G domain. Residues G166–S173, F191–V195, D213–G216, N283–D286, and S314–A316 contribute to the GTP site. Residues S173 and T193 each contribute to the Mg(2+) site.

The protein belongs to the TRAFAC class OBG-HflX-like GTPase superfamily. OBG GTPase family. In terms of assembly, monomer. Mg(2+) serves as cofactor.

The protein localises to the cytoplasm. In terms of biological role, an essential GTPase which binds GTP, GDP and possibly (p)ppGpp with moderate affinity, with high nucleotide exchange rates and a fairly low GTP hydrolysis rate. Plays a role in control of the cell cycle, stress response, ribosome biogenesis and in those bacteria that undergo differentiation, in morphogenesis control. This chain is GTPase Obg, found in Escherichia coli O7:K1 (strain IAI39 / ExPEC).